Here is a 160-residue protein sequence, read N- to C-terminus: Putative pre-16S rRNA nuclease (160 aa).

The protein belongs to the YqgF nuclease family.

Its subcellular location is the cytoplasm. Could be a nuclease involved in processing of the 5'-end of pre-16S rRNA. The polypeptide is Putative pre-16S rRNA nuclease (Cutibacterium acnes (strain DSM 16379 / KPA171202) (Propionibacterium acnes)).